Reading from the N-terminus, the 83-residue chain is Cell division topological specificity factor (83 aa).

The protein belongs to the MinE family.

Functionally, prevents the cell division inhibition by proteins MinC and MinD at internal division sites while permitting inhibition at polar sites. This ensures cell division at the proper site by restricting the formation of a division septum at the midpoint of the long axis of the cell. This chain is Cell division topological specificity factor, found in Marinobacter nauticus (strain ATCC 700491 / DSM 11845 / VT8) (Marinobacter aquaeolei).